The sequence spans 284 residues: Pseudouridine-5'-phosphate glycosidase (284 aa).

Glutamate 17 functions as the Proton donor in the catalytic mechanism. The substrate site is built by lysine 77 and valine 97. Residue aspartate 126 participates in Mn(2+) binding. Position 128-130 (128-130) interacts with substrate; it reads SQD. Catalysis depends on lysine 147, which acts as the Nucleophile.

It belongs to the pseudouridine-5'-phosphate glycosidase family. In terms of assembly, homotrimer. The cofactor is Mn(2+).

The enzyme catalyses D-ribose 5-phosphate + uracil = psi-UMP + H2O. In terms of biological role, catalyzes the reversible cleavage of pseudouridine 5'-phosphate (PsiMP) to ribose 5-phosphate and uracil. Functions biologically in the cleavage direction, as part of a pseudouridine degradation pathway. This Thermotoga neapolitana (strain ATCC 49049 / DSM 4359 / NBRC 107923 / NS-E) protein is Pseudouridine-5'-phosphate glycosidase.